Reading from the N-terminus, the 295-residue chain is Elongation factor Ts (295 aa).

Residues 79–82 (TDFV) form an involved in Mg(2+) ion dislocation from EF-Tu region.

This sequence belongs to the EF-Ts family.

It is found in the cytoplasm. Its function is as follows. Associates with the EF-Tu.GDP complex and induces the exchange of GDP to GTP. It remains bound to the aminoacyl-tRNA.EF-Tu.GTP complex up to the GTP hydrolysis stage on the ribosome. This is Elongation factor Ts from Bacillus cereus (strain ATCC 10987 / NRS 248).